We begin with the raw amino-acid sequence, 355 residues long: 3-dehydroquinate synthase (355 aa).

Residues aspartate 67–lysine 72, glycine 101–aspartate 105, threonine 125–threonine 126, lysine 138, lysine 147, and phenylalanine 165–threonine 168 contribute to the NAD(+) site. Positions 180, 243, and 260 each coordinate Zn(2+).

The protein belongs to the sugar phosphate cyclases superfamily. Dehydroquinate synthase family. The cofactor is NAD(+). Co(2+) serves as cofactor. It depends on Zn(2+) as a cofactor.

It is found in the cytoplasm. The enzyme catalyses 7-phospho-2-dehydro-3-deoxy-D-arabino-heptonate = 3-dehydroquinate + phosphate. It participates in metabolic intermediate biosynthesis; chorismate biosynthesis; chorismate from D-erythrose 4-phosphate and phosphoenolpyruvate: step 2/7. Functionally, catalyzes the conversion of 3-deoxy-D-arabino-heptulosonate 7-phosphate (DAHP) to dehydroquinate (DHQ). The chain is 3-dehydroquinate synthase from Buchnera aphidicola subsp. Baizongia pistaciae (strain Bp).